Reading from the N-terminus, the 130-residue chain is Small ribosomal subunit protein uS9 (130 aa).

Belongs to the universal ribosomal protein uS9 family.

This is Small ribosomal subunit protein uS9 from Anaeromyxobacter dehalogenans (strain 2CP-1 / ATCC BAA-258).